Here is a 260-residue protein sequence, read N- to C-terminus: 3'-5' ssDNA/RNA exonuclease TatD (260 aa).

A divalent metal cation contacts are provided by Glu91, His127, and His152.

This sequence belongs to the metallo-dependent hydrolases superfamily. TatD-type hydrolase family. TatD subfamily. As to quaternary structure, monomer. It depends on Mg(2+) as a cofactor.

The protein localises to the cytoplasm. Functionally, 3'-5' exonuclease that prefers single-stranded DNA and RNA. May play a role in the H(2)O(2)-induced DNA damage repair. The chain is 3'-5' ssDNA/RNA exonuclease TatD from Escherichia fergusonii (strain ATCC 35469 / DSM 13698 / CCUG 18766 / IAM 14443 / JCM 21226 / LMG 7866 / NBRC 102419 / NCTC 12128 / CDC 0568-73).